An 80-amino-acid polypeptide reads, in one-letter code: MMKLMLFSIIVILFSLIGSIHGADVPGNYPLDSSDDTYLCAPLGENPFCIKICRKHGVKYGYCYAFQCWCEYLEDKNVKI.

Positions 1-22 (MMKLMLFSIIVILFSLIGSIHG) are cleaved as a signal peptide. Positions 25-80 (VPGNYPLDSSDDTYLCAPLGENPFCIKICRKHGVKYGYCYAFQCWCEYLEDKNVKI) constitute an LCN-type CS-alpha/beta domain. Disulfide bonds link Cys-40–Cys-63, Cys-49–Cys-68, and Cys-53–Cys-70.

The protein belongs to the long (3 C-C) scorpion toxin superfamily. Sodium/Potassium channel inhibitor family. In terms of tissue distribution, expressed by the venom gland.

It localises to the secreted. Functionally, inhibits the vertebrate potassium channels Kv1.1/KCNA1 and Kv1.3/KCNA3 in vitro with an IC(50) of 5.3 nM and 50.0 nM respectively. The protein is Beta-toxin KAaH1 of Androctonus australis (Sahara scorpion).